The primary structure comprises 267 residues: Shikimate dehydrogenase (NADP(+)) (267 aa).

Residues 14-16 and threonine 61 contribute to the shikimate site; that span reads SLS. The active-site Proton acceptor is lysine 65. Asparagine 86 and aspartate 101 together coordinate shikimate. NADP(+)-binding positions include 126–130, 150–155, and leucine 213; these read GAGGA and NRTHSK. Tyrosine 215 provides a ligand contact to shikimate. Glycine 236 contacts NADP(+).

This sequence belongs to the shikimate dehydrogenase family. In terms of assembly, homodimer.

The catalysed reaction is shikimate + NADP(+) = 3-dehydroshikimate + NADPH + H(+). It participates in metabolic intermediate biosynthesis; chorismate biosynthesis; chorismate from D-erythrose 4-phosphate and phosphoenolpyruvate: step 4/7. Functionally, involved in the biosynthesis of the chorismate, which leads to the biosynthesis of aromatic amino acids. Catalyzes the reversible NADPH linked reduction of 3-dehydroshikimate (DHSA) to yield shikimate (SA). The protein is Shikimate dehydrogenase (NADP(+)) of Vesicomyosocius okutanii subsp. Calyptogena okutanii (strain HA).